The primary structure comprises 92 residues: Small ribosomal subunit protein uS19 (92 aa).

It belongs to the universal ribosomal protein uS19 family.

Protein S19 forms a complex with S13 that binds strongly to the 16S ribosomal RNA. The polypeptide is Small ribosomal subunit protein uS19 (Mesorhizobium japonicum (strain LMG 29417 / CECT 9101 / MAFF 303099) (Mesorhizobium loti (strain MAFF 303099))).